The following is a 294-amino-acid chain: ATP synthase gamma chain (294 aa).

Belongs to the ATPase gamma chain family. F-type ATPases have 2 components, CF(1) - the catalytic core - and CF(0) - the membrane proton channel. CF(1) has five subunits: alpha(3), beta(3), gamma(1), delta(1), epsilon(1). CF(0) has three main subunits: a, b and c.

Its subcellular location is the cell inner membrane. Its function is as follows. Produces ATP from ADP in the presence of a proton gradient across the membrane. The gamma chain is believed to be important in regulating ATPase activity and the flow of protons through the CF(0) complex. This is ATP synthase gamma chain from Rhizorhabdus wittichii (strain DSM 6014 / CCUG 31198 / JCM 15750 / NBRC 105917 / EY 4224 / RW1) (Sphingomonas wittichii).